The primary structure comprises 367 residues: 4-hydroxyphenylpyruvate dioxygenase (367 aa).

VOC domains are found at residues 3–135 and 166–324; these read GFDH…FVDR and LIDH…IFTN. Residues His-169, His-252, and Glu-335 each coordinate Fe cation.

This sequence belongs to the 4HPPD family. Fe cation is required as a cofactor.

It carries out the reaction 3-(4-hydroxyphenyl)pyruvate + O2 = homogentisate + CO2. It functions in the pathway amino-acid degradation; L-phenylalanine degradation; acetoacetate and fumarate from L-phenylalanine: step 3/6. Key enzyme in the degradation of tyrosine. The protein is 4-hydroxyphenylpyruvate dioxygenase (hpd) of Dictyostelium discoideum (Social amoeba).